The primary structure comprises 207 residues: Ras-related protein Rab-8B (207 aa).

S17, G18, V19, G20, K21, T22, C23, T35, S39, and T40 together coordinate GTP. T22 is a binding site for Mg(2+). 2 short sequence motifs (switch) span residues 31–45 (DAFN…GIDF) and 63–80 (DTAG…YYRG). The Mg(2+) site is built by T40 and D63. G66 serves as a coordination point for GTP. T72 is modified (phosphothreonine; by LRRK2). GTP is bound by residues N121, K122, D124, A152, and K153. A phosphoserine mark is found at S180 and S183. At C204 the chain carries Cysteine methyl ester. Residue C204 is the site of S-geranylgeranyl cysteine attachment. A propeptide spans 205–207 (SLL) (removed in mature form).

The protein belongs to the small GTPase superfamily. Rab family. In terms of assembly, associated with actin, delta-catenin and alpha and beta tubulins. Interacts with OTOF. Interacts with PEX5R. Interacts with RAB3IP. Interacts with VIM. Interacts with CDH1. Interacts with MICALL2. Interacts with GDI1, GDI2, CHML and CHM; phosphorylation at Thr-72 disrupts these interactions. Interacts with MICAL1. The cofactor is Mg(2+). Phosphorylation of Thr-72 in the switch II region by LRRK2 prevents the association of RAB regulatory proteins, including CHM, CHML and RAB GDP dissociation inhibitors GDI1 and GDI2.

It is found in the cell membrane. The protein resides in the cytoplasmic vesicle. The protein localises to the phagosome membrane. It localises to the endosome membrane. It catalyses the reaction GTP + H2O = GDP + phosphate + H(+). Regulated by guanine nucleotide exchange factors (GEFs) including RAB3IP/RABIN8 which promotes the exchange of bound GDP for free GTP. Regulated by GTPase activating proteins (GAPs) which increase the GTP hydrolysis activity. Inhibited by GDP dissociation inhibitors (GDIs). Functionally, the small GTPases Rab are key regulators of intracellular membrane trafficking, from the formation of transport vesicles to their fusion with membranes. Rabs cycle between an inactive GDP-bound form and an active GTP-bound form that is able to recruit to membranes different sets of downstream effectors directly responsible for vesicle formation, movement, tethering and fusion. RAB8B may be involved in polarized vesicular trafficking and neurotransmitter release. May participate in cell junction dynamics in Sertoli cells. May also participate in the export of a subset of neosynthesized proteins through a Rab8-Rab10-Rab11-dependent endososomal export route. This chain is Ras-related protein Rab-8B, found in Mus musculus (Mouse).